The primary structure comprises 282 residues: Hydrogenase expression/formation protein HoxQ (282 aa).

The protein belongs to the HupH/HyaF family.

The polypeptide is Hydrogenase expression/formation protein HoxQ (hoxQ) (Cupriavidus necator (strain ATCC 17699 / DSM 428 / KCTC 22496 / NCIMB 10442 / H16 / Stanier 337) (Ralstonia eutropha)).